The chain runs to 159 residues: MKIMIIQGPNVNMLGVREVGIYGAMKMEEIHEQMKLAASQNNVELDFFQSNFEGEIVDKIQECLGTVDGIIINAAGYTHTSVAIRDAIAAVALPTIEVHISNVYRREEFRQKSLIAPVCSGTIVGFGPFGYHLALMGIIQICEQIKNLRAMQQAQQTNK.

Catalysis depends on tyrosine 22, which acts as the Proton acceptor. Residues asparagine 73, histidine 79, and aspartate 86 each contribute to the substrate site. Histidine 99 serves as the catalytic Proton donor. Residues 100-101 (IS) and arginine 110 contribute to the substrate site.

The protein belongs to the type-II 3-dehydroquinase family. As to quaternary structure, homododecamer.

The catalysed reaction is 3-dehydroquinate = 3-dehydroshikimate + H2O. Its pathway is metabolic intermediate biosynthesis; chorismate biosynthesis; chorismate from D-erythrose 4-phosphate and phosphoenolpyruvate: step 3/7. In terms of biological role, catalyzes a trans-dehydration via an enolate intermediate. The chain is 3-dehydroquinate dehydratase from Campylobacter jejuni subsp. jejuni serotype O:6 (strain 81116 / NCTC 11828).